The primary structure comprises 540 residues: O-phosphoserine--tRNA(Cys) ligase (540 aa).

Substrate-binding positions include 188 to 190 (HMT), 233 to 235 (SAS), 275 to 276 (YY), and Asn319.

The protein belongs to the class-II aminoacyl-tRNA synthetase family. O-phosphoseryl-tRNA(Cys) synthetase subfamily. Homotetramer. Interacts with SepCysS.

The enzyme catalyses tRNA(Cys) + O-phospho-L-serine + ATP = O-phospho-L-seryl-tRNA(Cys) + AMP + diphosphate. In terms of biological role, catalyzes the attachment of O-phosphoserine (Sep) to tRNA(Cys). The sequence is that of O-phosphoserine--tRNA(Cys) ligase from Methanococcus aeolicus (strain ATCC BAA-1280 / DSM 17508 / OCM 812 / Nankai-3).